Here is a 445-residue protein sequence, read N- to C-terminus: 3-dehydroquinate synthase, chloroplastic (445 aa).

Residues 1–68 (MAAFSLSAKQ…RASASSTAPV (68 aa)) constitute a chloroplast transit peptide. NAD(+) is bound by residues asparagine 122, 153–155 (DGE), lysine 158, 186–191 (GGVIGD), 211–212 (TT), lysine 224, lysine 233, and 251–254 (TLNT). Glutamate 266 provides a ligand contact to a divalent metal cation. Lysine 308 contributes to the NAD(+) binding site. Residues histidine 329 and histidine 346 each coordinate a divalent metal cation.

It belongs to the sugar phosphate cyclases superfamily. Dehydroquinate synthase family. In terms of assembly, homodimer. A divalent metal cation serves as cofactor. The cofactor is NAD(+).

It localises to the plastid. It is found in the chloroplast. The enzyme catalyses 7-phospho-2-dehydro-3-deoxy-D-arabino-heptonate = 3-dehydroquinate + phosphate. It functions in the pathway metabolic intermediate biosynthesis; chorismate biosynthesis; chorismate from D-erythrose 4-phosphate and phosphoenolpyruvate: step 2/7. Functionally, catalyzes the second step in the shikimate pathway. The protein is 3-dehydroquinate synthase, chloroplastic (DHQS) of Actinidia chinensis var. chinensis (Chinese soft-hair kiwi).